The following is a 303-amino-acid chain: Quinolinate synthase (303 aa).

Residues His24 and Ser41 each coordinate iminosuccinate. Cys86 is a [4Fe-4S] cluster binding site. Iminosuccinate is bound by residues Tyr112–Asn114 and Ser129. [4Fe-4S] cluster is bound at residue Cys172. Iminosuccinate contacts are provided by residues His198–Glu200 and Thr215. Position 260 (Cys260) interacts with [4Fe-4S] cluster.

The protein belongs to the quinolinate synthase family. Type 2 subfamily. [4Fe-4S] cluster serves as cofactor.

The protein localises to the cytoplasm. It catalyses the reaction iminosuccinate + dihydroxyacetone phosphate = quinolinate + phosphate + 2 H2O + H(+). Its pathway is cofactor biosynthesis; NAD(+) biosynthesis; quinolinate from iminoaspartate: step 1/1. Its function is as follows. Catalyzes the condensation of iminoaspartate with dihydroxyacetone phosphate to form quinolinate. This is Quinolinate synthase from Alkaliphilus metalliredigens (strain QYMF).